The chain runs to 165 residues: NADPH-dependent 7-cyano-7-deazaguanine reductase (165 aa).

The active-site Thioimide intermediate is Cys56. Residue Asp63 is the Proton donor of the active site. Substrate contacts are provided by residues 78 to 80 (VES) and 97 to 98 (HE).

This sequence belongs to the GTP cyclohydrolase I family. QueF type 1 subfamily.

Its subcellular location is the cytoplasm. It catalyses the reaction 7-aminomethyl-7-carbaguanine + 2 NADP(+) = 7-cyano-7-deazaguanine + 2 NADPH + 3 H(+). It functions in the pathway tRNA modification; tRNA-queuosine biosynthesis. Its function is as follows. Catalyzes the NADPH-dependent reduction of 7-cyano-7-deazaguanine (preQ0) to 7-aminomethyl-7-deazaguanine (preQ1). The sequence is that of NADPH-dependent 7-cyano-7-deazaguanine reductase from Bacillus mycoides (strain KBAB4) (Bacillus weihenstephanensis).